The chain runs to 131 residues: Small nuclear ribonucleoprotein SmD3b (131 aa).

The Sm domain maps to 7-79; the sequence is IPVKLLHEAS…VRFMVIPDIL (73 aa). The tract at residues 96 to 131 is disordered; the sequence is SSSLGVGRGRGAMRGKPAAGPGRGTGGRGAVPPVRR.

It belongs to the snRNP core protein family. In terms of tissue distribution, expressed in young seedlings, roots, leaves, flowers and immature siliques.

The protein localises to the cytoplasm. The protein resides in the cytosol. It localises to the nucleus. Core component of the spliceosomal U1, U2, U4 and U5 small nuclear ribonucleoproteins (snRNPs), the building blocks of the spliceosome. May play a major role in the splicing of cellular pre-mRNAs. Required for normal plant development. The polypeptide is Small nuclear ribonucleoprotein SmD3b (Arabidopsis thaliana (Mouse-ear cress)).